A 530-amino-acid chain; its full sequence is Autoinducer-2 kinase (530 aa).

It belongs to the FGGY kinase family.

The protein localises to the cytoplasm. The enzyme catalyses (S)-4,5-dihydroxypentane-2,3-dione + ATP = (2S)-2-hydroxy-3,4-dioxopentyl phosphate + ADP + H(+). In terms of biological role, catalyzes the phosphorylation of autoinducer-2 (AI-2) to phospho-AI-2, which subsequently inactivates the transcriptional regulator LsrR and leads to the transcription of the lsr operon. Phosphorylates the ring-open form of (S)-4,5-dihydroxypentane-2,3-dione (DPD), which is the precursor to all AI-2 signaling molecules, at the C5 position. This is Autoinducer-2 kinase from Escherichia coli (strain SMS-3-5 / SECEC).